Here is a 247-residue protein sequence, read N- to C-terminus: Probable transcriptional regulatory protein BT_0627 (247 aa).

The protein belongs to the TACO1 family.

The protein localises to the cytoplasm. The polypeptide is Probable transcriptional regulatory protein BT_0627 (Bacteroides thetaiotaomicron (strain ATCC 29148 / DSM 2079 / JCM 5827 / CCUG 10774 / NCTC 10582 / VPI-5482 / E50)).